Reading from the N-terminus, the 357-residue chain is Chorismate synthase (357 aa).

Arginine 47 lines the NADP(+) pocket. Residues 123 to 125, glycine 281, 296 to 300, and arginine 324 each bind FMN; these read RAS and KPTSS.

It belongs to the chorismate synthase family. Homotetramer. The cofactor is FMNH2.

It catalyses the reaction 5-O-(1-carboxyvinyl)-3-phosphoshikimate = chorismate + phosphate. It participates in metabolic intermediate biosynthesis; chorismate biosynthesis; chorismate from D-erythrose 4-phosphate and phosphoenolpyruvate: step 7/7. In terms of biological role, catalyzes the anti-1,4-elimination of the C-3 phosphate and the C-6 proR hydrogen from 5-enolpyruvylshikimate-3-phosphate (EPSP) to yield chorismate, which is the branch point compound that serves as the starting substrate for the three terminal pathways of aromatic amino acid biosynthesis. This reaction introduces a second double bond into the aromatic ring system. This chain is Chorismate synthase, found in Chlamydia trachomatis serovar A (strain ATCC VR-571B / DSM 19440 / HAR-13).